We begin with the raw amino-acid sequence, 489 residues long: EGF-like domain-containing protein 2 (489 aa).

A signal peptide spans 1–23; the sequence is MMQTLLRGLCVVVLFWGYIKASA. The EGF-like domain occupies 73 to 109; it reads PATLCDPPCLNGGQCFEPTADTYMCMCSEAFYGSQCE. 3 cysteine pairs are disulfide-bonded: Cys77–Cys87, Cys81–Cys97, and Cys99–Cys108. The region spanning 116–370 is the ZP domain; it reads ECSGDQITIN…GSCPTPAPPA (255 aa). N-linked (GlcNAc...) asparagine glycosylation occurs at Asn229. 2 disordered regions span residues 358–389 and 404–425; these read CEPGSCPTPAPPAPVQPTPSENPGRKRRAASD and RSNEKLRLPHNKSDKKSQQNAD. Positions 363-374 are enriched in pro residues; the sequence is CPTPAPPAPVQP. The span at 404–420 shows a compositional bias: basic and acidic residues; sequence RSNEKLRLPHNKSDKKS. N-linked (GlcNAc...) asparagine glycans are attached at residues Asn414 and Asn479.

Component of the acid-insoluble organic matrix of calcified layers of the shell (at protein level).

The protein localises to the secreted. This chain is EGF-like domain-containing protein 2, found in Lottia gigantea (Giant owl limpet).